The primary structure comprises 430 residues: Histidine--tRNA ligase (430 aa).

It belongs to the class-II aminoacyl-tRNA synthetase family.

The protein resides in the cytoplasm. The catalysed reaction is tRNA(His) + L-histidine + ATP = L-histidyl-tRNA(His) + AMP + diphosphate + H(+). The protein is Histidine--tRNA ligase of Metallosphaera sedula (strain ATCC 51363 / DSM 5348 / JCM 9185 / NBRC 15509 / TH2).